The chain runs to 510 residues: Sphingolipid C9-methyltransferase B (510 aa).

Residue asparagine 55 is glycosylated (N-linked (GlcNAc...) asparagine). 2 consecutive transmembrane segments (helical) span residues 62 to 82 (LLGG…GGGA) and 84 to 104 (TFVF…WTYA). Asparagine 175 carries N-linked (GlcNAc...) asparagine glycosylation. S-adenosyl-L-methionine is bound by residues 227–228 (YT), 264–272 (MLDIGCGWG), 290–295 (TIAENQ), and 320–321 (YR). A glycan (N-linked (GlcNAc...) asparagine) is linked at asparagine 294.

It belongs to the CFA/CMAS family.

Its subcellular location is the membrane. It catalyses the reaction a (4E,8E)-4-sphinga-4,8-dienine ceramide + S-adenosyl-L-methionine = a 9-methyl-(4E,8E)-sphinga-4,8-dienine ceramide + S-adenosyl-L-homocysteine + H(+). It participates in lipid metabolism; sphingolipid metabolism. Functionally, catalyzes methylation of the sphingoid base component of glucosylceramides (GluCers) at the C9-position. Sphingolipid C9-methylation requires 4,8-desaturated ceramides as substrates. Glucosylceramides play important roles in growth, differentiation and pathogenicity. The methyl group at the C9-position distinguishes fungal glucosylceramides from those of plants and animals and may thus play a role in host-pathogen interactions enabling the host to recognize the fungal attack and initiate specific defense responses. The polypeptide is Sphingolipid C9-methyltransferase B (Emericella nidulans (strain FGSC A4 / ATCC 38163 / CBS 112.46 / NRRL 194 / M139) (Aspergillus nidulans)).